We begin with the raw amino-acid sequence, 69 residues long: uncharacterized protein (69 aa).

This is an uncharacterized protein from Saccharomyces cerevisiae (strain ATCC 204508 / S288c) (Baker's yeast).